A 263-amino-acid polypeptide reads, in one-letter code: 3-methyl-2-oxobutanoate hydroxymethyltransferase (263 aa).

Asp45 and Asp84 together coordinate Mg(2+). 3-methyl-2-oxobutanoate contacts are provided by residues 45 to 46, Asp84, and Lys112; that span reads DS. Residue Glu114 participates in Mg(2+) binding. Catalysis depends on Glu181, which acts as the Proton acceptor.

The protein belongs to the PanB family. In terms of assembly, homodecamer; pentamer of dimers. It depends on Mg(2+) as a cofactor.

The protein resides in the cytoplasm. It carries out the reaction 3-methyl-2-oxobutanoate + (6R)-5,10-methylene-5,6,7,8-tetrahydrofolate + H2O = 2-dehydropantoate + (6S)-5,6,7,8-tetrahydrofolate. It participates in cofactor biosynthesis; (R)-pantothenate biosynthesis; (R)-pantoate from 3-methyl-2-oxobutanoate: step 1/2. Its function is as follows. Catalyzes the reversible reaction in which hydroxymethyl group from 5,10-methylenetetrahydrofolate is transferred onto alpha-ketoisovalerate to form ketopantoate. This is 3-methyl-2-oxobutanoate hydroxymethyltransferase from Buchnera aphidicola subsp. Acyrthosiphon pisum (strain APS) (Acyrthosiphon pisum symbiotic bacterium).